Reading from the N-terminus, the 473-residue chain is Lactate utilization protein B (473 aa).

4Fe-4S ferredoxin-type domains are found at residues 302–332 and 351–380; these read GSEF…GHSY and YDDY…LHDL. [4Fe-4S] cluster contacts are provided by cysteine 311, cysteine 314, cysteine 317, cysteine 321, cysteine 364, cysteine 367, and cysteine 371.

Belongs to the LutB/YkgF family.

In terms of biological role, is involved in L-lactate degradation and allows cells to grow with lactate as the sole carbon source. Has probably a role as an electron transporter during oxidation of L-lactate. The sequence is that of Lactate utilization protein B from Bacillus cytotoxicus (strain DSM 22905 / CIP 110041 / 391-98 / NVH 391-98).